The following is a 341-amino-acid chain: Uroporphyrinogen decarboxylase (341 aa).

Substrate is bound by residues 26–30 (RQAGR), D75, Y150, S205, and H318.

It belongs to the uroporphyrinogen decarboxylase family. In terms of assembly, homodimer.

It is found in the cytoplasm. It catalyses the reaction uroporphyrinogen III + 4 H(+) = coproporphyrinogen III + 4 CO2. It functions in the pathway porphyrin-containing compound metabolism; protoporphyrin-IX biosynthesis; coproporphyrinogen-III from 5-aminolevulinate: step 4/4. In terms of biological role, catalyzes the decarboxylation of four acetate groups of uroporphyrinogen-III to yield coproporphyrinogen-III. The protein is Uroporphyrinogen decarboxylase of Thermus thermophilus (strain ATCC BAA-163 / DSM 7039 / HB27).